Reading from the N-terminus, the 332-residue chain is DNA-directed RNA polymerase subunit alpha (332 aa).

Residues 1 to 231 (MQTNLLKPKT…EQLAVFAQLD (231 aa)) are alpha N-terminal domain (alpha-NTD). An alpha C-terminal domain (alpha-CTD) region spans residues 252–332 (FDPILLRPVD…NWPPAGLEKR (81 aa)).

Belongs to the RNA polymerase alpha chain family. As to quaternary structure, homodimer. The RNAP catalytic core consists of 2 alpha, 1 beta, 1 beta' and 1 omega subunit. When a sigma factor is associated with the core the holoenzyme is formed, which can initiate transcription.

It catalyses the reaction RNA(n) + a ribonucleoside 5'-triphosphate = RNA(n+1) + diphosphate. In terms of biological role, DNA-dependent RNA polymerase catalyzes the transcription of DNA into RNA using the four ribonucleoside triphosphates as substrates. In Delftia acidovorans (strain DSM 14801 / SPH-1), this protein is DNA-directed RNA polymerase subunit alpha.